The chain runs to 122 residues: Large ribosomal subunit protein uL24 (122 aa).

The interval 43-64 is disordered; the sequence is IRKHHRRDMPTPQGGTTKGGII.

The protein belongs to the universal ribosomal protein uL24 family. Part of the 50S ribosomal subunit.

Functionally, one of two assembly initiator proteins, it binds directly to the 5'-end of the 23S rRNA, where it nucleates assembly of the 50S subunit. One of the proteins that surrounds the polypeptide exit tunnel on the outside of the subunit. In Cutibacterium acnes (strain DSM 16379 / KPA171202) (Propionibacterium acnes), this protein is Large ribosomal subunit protein uL24.